Consider the following 968-residue polypeptide: RNA polymerase-associated protein RapA (968 aa).

In terms of domain architecture, Helicase ATP-binding spans 164-334; the sequence is DVGRRHAPRV…FARLRLLDPN (171 aa). Residue 177–184 coordinates ATP; that stretch reads DEVGLGKT. A DEAH box motif is present at residues 280–283; the sequence is DEAH. The Helicase C-terminal domain occupies 490-644; the sequence is RVEWLMGYLT…TCPTGRTVYD (155 aa).

Belongs to the SNF2/RAD54 helicase family. RapA subfamily. In terms of assembly, interacts with the RNAP. Has a higher affinity for the core RNAP than for the holoenzyme. Its ATPase activity is stimulated by binding to RNAP.

Functionally, transcription regulator that activates transcription by stimulating RNA polymerase (RNAP) recycling in case of stress conditions such as supercoiled DNA or high salt concentrations. Probably acts by releasing the RNAP, when it is trapped or immobilized on tightly supercoiled DNA. Does not activate transcription on linear DNA. Probably not involved in DNA repair. The protein is RNA polymerase-associated protein RapA of Klebsiella pneumoniae subsp. pneumoniae (strain ATCC 700721 / MGH 78578).